We begin with the raw amino-acid sequence, 311 residues long: Pyrimidine-specific ribonucleoside hydrolase RihA (311 aa).

His240 is an active-site residue.

The protein belongs to the IUNH family. RihA subfamily.

Its function is as follows. Hydrolyzes cytidine or uridine to ribose and cytosine or uracil, respectively. This is Pyrimidine-specific ribonucleoside hydrolase RihA from Salmonella paratyphi A (strain ATCC 9150 / SARB42).